Reading from the N-terminus, the 86-residue chain is Small ribosomal subunit protein uS17 (86 aa).

Belongs to the universal ribosomal protein uS17 family. As to quaternary structure, part of the 30S ribosomal subunit.

In terms of biological role, one of the primary rRNA binding proteins, it binds specifically to the 5'-end of 16S ribosomal RNA. The polypeptide is Small ribosomal subunit protein uS17 (Nitrosococcus oceani (strain ATCC 19707 / BCRC 17464 / JCM 30415 / NCIMB 11848 / C-107)).